The following is a 201-amino-acid chain: Recombination protein RecR (201 aa).

Residues 57–72 (CKYCSNFGNKDECDIC) form a C4-type zinc finger. Positions 80-176 (TKLMIVTTNE…QIYRIGFGIP (97 aa)) constitute a Toprim domain.

It belongs to the RecR family.

Its function is as follows. May play a role in DNA repair. It seems to be involved in an RecBC-independent recombinational process of DNA repair. It may act with RecF and RecO. The sequence is that of Recombination protein RecR from Ureaplasma urealyticum serovar 10 (strain ATCC 33699 / Western).